We begin with the raw amino-acid sequence, 1002 residues long: Golgin subfamily A member 2 (1002 aa).

The span at 1–11 shows a compositional bias: pro residues; it reads MWPQPRLPPRP. Residues 1–84 are interaction with p115/USO1; it reads MWPQPRLPPR…AATLQPSDDT (84 aa). The disordered stretch occupies residues 1–107; sequence MWPQPRLPPR…TSMAASQNHD (107 aa). Positions 16–892 form a coiled coil; sequence ETRQSKLAAA…LELQELVLRL (877 aa). Residues R18, R30, and R35 each carry the dimethylated arginine modification. The Nuclear localization signal signature appears at 26–49; sequence KKKLREYQQRNSPGVPTGAKKKKK. S37 carries the phosphoserine modification. Polar residues predominate over residues 52–63; that stretch reads NGSNPETTTSGG. Phosphoserine is present on S66. Residues 95–105 are compositionally biased toward polar residues; it reads ASLTSMAASQN. Residues S273, S438, and S690 each carry the phosphoserine modification. A disordered region spans residues 694 to 724; it reads HPGEGDGLDREEEEDEEEEEEEAVAVPQPMP. A compositionally biased stretch (acidic residues) spans 702-716; that stretch reads DREEEEDEEEEEEEA. Residues S937, S953, and S981 each carry the phosphoserine modification. An interaction with GORASP1/GRASP65 region spans residues 992–1002; that stretch reads DENDEVKITVI.

This sequence belongs to the GOLGA2 family. In terms of assembly, homodimer, may assemble into homohexamers. Homotetramer; forms a parallel homotetramer with a flexible rod-like structure that can give rise to I- and Y-shaped conformations. Interacts with GORASP1/GRASP65. The homooligomer forms a complex with GORASP1 with a 1:1 stoichiometry. Interacts with RAB1B that has been activated by GTP-binding. Interacts with p115/USO1; interaction with p115/USO1 inhibits interaction with STX5 and/or RAB1B. Interacts with STX5. Interacts with ZFPL1. Interacts with AKAP450/AKAP9; leading to recruit AKAP450/AKAP9 to the cis-Golgi. In terms of processing, cleaved by caspases at the onset of apoptosis. Methylation by PRMT5 is required for Golgi ribbon formation. While dimethylation at Arg-30 and Arg-35 are confirmed in vivo, it is unclear whether Arg-18 is methylated in vivo. Post-translationally, phosphorylated at Ser-37 by CDK1 at the onset of mitosis, inhibiting the interaction with p115/USO1 and triggering Golgi disassembly. Phosphorylated at Ser-37 in prophase as the Golgi complex starts to break down, and remains phosphorylated during further breakdown and partitioning of the Golgi fragments in metaphase and anaphase. In telophase, GM130 is dephosphorylated by PP2A as the Golgi fragments start to reassemble.

Its subcellular location is the golgi apparatus. It localises to the cis-Golgi network membrane. It is found in the endoplasmic reticulum-Golgi intermediate compartment membrane. The protein localises to the cytoplasm. The protein resides in the cytoskeleton. Its subcellular location is the spindle pole. Peripheral membrane component of the cis-Golgi stack that acts as a membrane skeleton that maintains the structure of the Golgi apparatus, and as a vesicle thether that facilitates vesicle fusion to the Golgi membrane. Required for normal protein transport from the endoplasmic reticulum to the Golgi apparatus and the cell membrane. Together with p115/USO1 and STX5, involved in vesicle tethering and fusion at the cis-Golgi membrane to maintain the stacked and inter-connected structure of the Golgi apparatus. Plays a central role in mitotic Golgi disassembly: phosphorylation at Ser-37 by CDK1 at the onset of mitosis inhibits the interaction with p115/USO1, preventing tethering of COPI vesicles and thereby inhibiting transport through the Golgi apparatus during mitosis. Also plays a key role in spindle pole assembly and centrosome organization. Promotes the mitotic spindle pole assembly by activating the spindle assembly factor TPX2 to nucleate microtubules around the Golgi and capture them to couple mitotic membranes to the spindle: upon phosphorylation at the onset of mitosis, GOLGA2 interacts with importin-alpha via the nuclear localization signal region, leading to recruit importin-alpha to the Golgi membranes and liberate the spindle assembly factor TPX2 from importin-alpha. TPX2 then activates AURKA kinase and stimulates local microtubule nucleation. Upon filament assembly, nascent microtubules are further captured by GOLGA2, thus linking Golgi membranes to the spindle. Regulates the meiotic spindle pole assembly, probably via the same mechanism. Also regulates the centrosome organization. Also required for the Golgi ribbon formation and glycosylation of membrane and secretory proteins. This chain is Golgin subfamily A member 2 (GOLGA2), found in Homo sapiens (Human).